The following is a 754-amino-acid chain: Ribosomal RNA large subunit methyltransferase K/L (754 aa).

The 112-residue stretch at 46–157 folds into the THUMP domain; it reads TAYRLCLWSR…RGEAILSLDL (112 aa).

This sequence belongs to the methyltransferase superfamily. RlmKL family.

It is found in the cytoplasm. The catalysed reaction is guanosine(2445) in 23S rRNA + S-adenosyl-L-methionine = N(2)-methylguanosine(2445) in 23S rRNA + S-adenosyl-L-homocysteine + H(+). It carries out the reaction guanosine(2069) in 23S rRNA + S-adenosyl-L-methionine = N(2)-methylguanosine(2069) in 23S rRNA + S-adenosyl-L-homocysteine + H(+). Specifically methylates the guanine in position 2445 (m2G2445) and the guanine in position 2069 (m7G2069) of 23S rRNA. The protein is Ribosomal RNA large subunit methyltransferase K/L of Pseudomonas fluorescens (strain ATCC BAA-477 / NRRL B-23932 / Pf-5).